A 387-amino-acid polypeptide reads, in one-letter code: Dual-specificity RNA methyltransferase RlmN (387 aa).

The Proton acceptor role is filled by Glu110. Residues 117–349 enclose the Radical SAM core domain; it reads VGKAGALCVS…NRAGYASPIR (233 aa). A disulfide bridge connects residues Cys124 and Cys360. The [4Fe-4S] cluster site is built by Cys131, Cys135, and Cys138. Residues 186–187, Ser218, 240–242, and Asn317 contribute to the S-adenosyl-L-methionine site; these read GE and SLH. The S-methylcysteine intermediate role is filled by Cys360.

It belongs to the radical SAM superfamily. RlmN family. [4Fe-4S] cluster is required as a cofactor.

It is found in the cytoplasm. The enzyme catalyses adenosine(2503) in 23S rRNA + 2 reduced [2Fe-2S]-[ferredoxin] + 2 S-adenosyl-L-methionine = 2-methyladenosine(2503) in 23S rRNA + 5'-deoxyadenosine + L-methionine + 2 oxidized [2Fe-2S]-[ferredoxin] + S-adenosyl-L-homocysteine. The catalysed reaction is adenosine(37) in tRNA + 2 reduced [2Fe-2S]-[ferredoxin] + 2 S-adenosyl-L-methionine = 2-methyladenosine(37) in tRNA + 5'-deoxyadenosine + L-methionine + 2 oxidized [2Fe-2S]-[ferredoxin] + S-adenosyl-L-homocysteine. Specifically methylates position 2 of adenine 2503 in 23S rRNA and position 2 of adenine 37 in tRNAs. m2A2503 modification seems to play a crucial role in the proofreading step occurring at the peptidyl transferase center and thus would serve to optimize ribosomal fidelity. This is Dual-specificity RNA methyltransferase RlmN from Hyphomonas neptunium (strain ATCC 15444).